A 229-amino-acid chain; its full sequence is Protein FAM3C (229 aa).

The signal sequence occupies residues 1-24 (MRIAGAIKFVVAVALFLLTFYVIS). 2 disulfides stabilise this stretch: cysteine 59–cysteine 87 and cysteine 65–cysteine 222. The 159-residue stretch at 68-226 (KHFAFKIASG…VEMEGCIPQK (159 aa)) folds into the GG-type lectin domain.

This sequence belongs to the FAM3 family. In terms of tissue distribution, expressed in the retinal ganglion cell layer.

Its subcellular location is the secreted. Its function is as follows. Involved in retinal laminar formation. The chain is Protein FAM3C (fam3c) from Xenopus laevis (African clawed frog).